We begin with the raw amino-acid sequence, 207 residues long: Protein-L-isoaspartate O-methyltransferase (207 aa).

The active site involves Ser-56.

It belongs to the methyltransferase superfamily. L-isoaspartyl/D-aspartyl protein methyltransferase family.

It localises to the cytoplasm. It carries out the reaction [protein]-L-isoaspartate + S-adenosyl-L-methionine = [protein]-L-isoaspartate alpha-methyl ester + S-adenosyl-L-homocysteine. In terms of biological role, catalyzes the methyl esterification of L-isoaspartyl residues in peptides and proteins that result from spontaneous decomposition of normal L-aspartyl and L-asparaginyl residues. It plays a role in the repair and/or degradation of damaged proteins. This is Protein-L-isoaspartate O-methyltransferase from Pyrobaculum neutrophilum (strain DSM 2338 / JCM 9278 / NBRC 100436 / V24Sta) (Thermoproteus neutrophilus).